Consider the following 389-residue polypeptide: uncharacterized protein (389 aa).

4 disordered regions span residues 119–156 (SSLF…GENQ), 180–233 (PTSK…SSMG), 294–321 (SIPS…TSRT), and 362–389 (PEDM…EIKV). Polar residues predominate over residues 137-155 (SPSTINIEKNRHSSNSGEN). The segment covering 190 to 204 (DDGDEEDDTDDEGEA) has biased composition (acidic residues).

This is an uncharacterized protein from Caenorhabditis elegans.